The following is a 287-amino-acid chain: 2-dehydro-3-deoxyphosphooctonate aldolase (287 aa).

Belongs to the KdsA family.

It is found in the cytoplasm. It carries out the reaction D-arabinose 5-phosphate + phosphoenolpyruvate + H2O = 3-deoxy-alpha-D-manno-2-octulosonate-8-phosphate + phosphate. It participates in carbohydrate biosynthesis; 3-deoxy-D-manno-octulosonate biosynthesis; 3-deoxy-D-manno-octulosonate from D-ribulose 5-phosphate: step 2/3. The protein operates within bacterial outer membrane biogenesis; lipopolysaccharide biosynthesis. This chain is 2-dehydro-3-deoxyphosphooctonate aldolase, found in Magnetococcus marinus (strain ATCC BAA-1437 / JCM 17883 / MC-1).